A 710-amino-acid chain; its full sequence is MRDGTTRVNTTGMRLKTITDVLIKLSQSSTHYDSAIFTSHKVKKFNLTTNENEPIEIWVYDDTSSSFPILTEYLKKHLESLIAAANHIFNRNEQLKKHWHETLVYIKKALEERLKFNIDLKQARKLVRDLINEIGFFWINQQPTMITTASQLYKGFLTKLFEAVEIAIPDYKRNHILVIQQTGDIIKCEYYERGTSRSLRSNVENALIEYRFAENTHESEKTKDFPSAHYRGKLGLCNVATCFSATFDANNETTSCKIYYRHASFPPIDLYPLYRQERKELKNTKQRYLKKKNEMEEGGKAMVNWQNRAFKTQQCREGIKLITTRNMEMLRDLMRKNRSELELLPAERPPLIYTNISLLTVKQWMDKDFQEEQYHDTILAAERLRSRGNRENEDKFVPIMFNFGVNLQAKWQRRKSWWRPSLPKEQVFENDRAFFKFNHLVIERLQLIASKKTFSFAKTQALPHLWELNEIASSWNRYEKTLDCLANAYDAACNNYEKDPSKENIEYLQECEEKLSQAKKNLWKVADTHIAFYRKDFKQLIANRSNFSNDDSELQAILKDWKMFNSLYLRDAWHDASFSIQTSIGNLTRVVGSELSINCKSADDRTTGFCRRFEGSEEGKDASSPHVRNDTDGGSIKFTGWAKTKKAKAIAKTEKKIAEAFSTHKLKKAVVAKSKIPTSHSLISSSSFWKLKAPDTSPFLTTNLPHSLSG.

Coiled-coil stretches lie at residues 273–298 and 477–528; these read LYRQERKELKNTKQRYLKKKNEMEEG and RYEK…VADT.

This is an uncharacterized protein from Coxiella burnetii (strain RSA 493 / Nine Mile phase I).